The following is a 300-amino-acid chain: D-alanine--D-alanine ligase (300 aa).

Residues 99-293 (KKILKYANIN…FAELLNSIVK (195 aa)) enclose the ATP-grasp domain. 126–181 (IEKIGYPVFVKPNSGGSSVATNLVKDGDGIKEAVELALKYDKEVMIENYTKGEEIT) serves as a coordination point for ATP. Mg(2+) contacts are provided by Asp-248, Glu-260, and Asn-262.

This sequence belongs to the D-alanine--D-alanine ligase family. Mg(2+) is required as a cofactor. The cofactor is Mn(2+).

It localises to the cytoplasm. It carries out the reaction 2 D-alanine + ATP = D-alanyl-D-alanine + ADP + phosphate + H(+). The protein operates within cell wall biogenesis; peptidoglycan biosynthesis. In terms of biological role, cell wall formation. In Clostridium botulinum (strain 657 / Type Ba4), this protein is D-alanine--D-alanine ligase.